A 651-amino-acid chain; its full sequence is Polyadenylate-binding protein 1 (651 aa).

Residues 1-27 (MSSTESPVPAAAAPAEAVPASTPAPAA) show a composition bias toward low complexity. A disordered region spans residues 1–42 (MSSTESPVPAAAAPAEAVPASTPAPAAEQPAVGNGEQRNNAD). RRM domains follow at residues 47–125 (TSLY…WSQR), 135–211 (GNIF…HHIP), 227–304 (TNVY…RAQK), and 330–407 (VNLY…LAQR). 2 disordered regions span residues 481 to 554 (QPGQ…EADQ) and 632 to 651 (QNDS…KTEA). Residues 529–540 (AGQPVPGQPMPR) are compositionally biased toward pro residues. A PABC domain is found at 555-632 (PGALTAAALA…ALEVLKEYQQ (78 aa)). Residues 636–651 (AGAEAEANAEAPKTEA) show a composition bias toward low complexity.

It belongs to the polyadenylate-binding protein type-1 family. Part of large ribonucleoprotein complexes (mRNPs) containing RNA-binding proteins RRM4 and PAB1, endosome-binding protein UPA1, core scaffold protein UPA2 and associated factor GRP1. Interacts (via PABC domain) with UPA1 (via PAM2 domain). Interacts (via PABC domain) with UPA2 (via PAM2 domains).

Its subcellular location is the cytoplasm. It localises to the cytoskeleton. The protein localises to the endosome. In terms of biological role, RNA-binding protein involved in the formation of polar-growing hyphae which is essential for infection by the plant pathogen. Component of endosomal mRNA transport that regulates polarity of the infectious hyphae by transporting a broad spectrum of cargo mRNAs from the nucleus to cell poles. This chain is Polyadenylate-binding protein 1, found in Mycosarcoma maydis (Corn smut fungus).